Here is a 182-residue protein sequence, read N- to C-terminus: Large ribosomal subunit protein uL5m (182 aa).

Belongs to the universal ribosomal protein uL5 family.

Its subcellular location is the mitochondrion. This Reclinomonas americana protein is Large ribosomal subunit protein uL5m (RPL5).